Reading from the N-terminus, the 260-residue chain is uncharacterized protein (260 aa).

Positions 1 to 22 (MKHSKKLLLCISFLLITIFISG) are cleaved as a signal peptide. Residue Cys23 is the site of N-palmitoyl cysteine attachment. Residue Cys23 is the site of S-diacylglycerol cysteine attachment.

The protein belongs to the staphylococcal tandem lipoprotein family.

The protein localises to the cell membrane. This is an uncharacterized protein from Staphylococcus epidermidis (strain ATCC 35984 / DSM 28319 / BCRC 17069 / CCUG 31568 / BM 3577 / RP62A).